The following is a 175-amino-acid chain: Transcription factor E (175 aa).

The HTH TFE/IIEalpha-type domain occupies N8–P90.

The protein belongs to the TFE family. As to quaternary structure, monomer. Interaction with RNA polymerase subunits RpoF and RpoE is necessary for Tfe stimulatory transcription activity. Able to interact with Tbp and RNA polymerase in the absence of DNA promoter. Interacts both with the preinitiation and elongation complexes.

Transcription factor that plays a role in the activation of archaeal genes transcribed by RNA polymerase. Facilitates transcription initiation by enhancing TATA-box recognition by TATA-box-binding protein (Tbp), and transcription factor B (Tfb) and RNA polymerase recruitment. Not absolutely required for transcription in vitro, but particularly important in cases where Tbp or Tfb function is not optimal. It dynamically alters the nucleic acid-binding properties of RNA polymerases by stabilizing the initiation complex and destabilizing elongation complexes. Seems to translocate with the RNA polymerase following initiation and acts by binding to the non template strand of the transcription bubble in elongation complexes. The sequence is that of Transcription factor E from Natronomonas pharaonis (strain ATCC 35678 / DSM 2160 / CIP 103997 / JCM 8858 / NBRC 14720 / NCIMB 2260 / Gabara) (Halobacterium pharaonis).